We begin with the raw amino-acid sequence, 453 residues long: Ribosomal protein uS12 methylthiotransferase RimO (453 aa).

Residues 6-116 (PKVGFVSLGC…VMEAVHEALP (111 aa)) enclose the MTTase N-terminal domain. [4Fe-4S] cluster is bound by residues C15, C51, C80, C147, C151, and C154. Positions 133 to 370 (LTPRHYAYLK…MEKQAQISAA (238 aa)) constitute a Radical SAM core domain. Positions 373–441 (EAKIGTVQQC…EHDLYGDALP (69 aa)) constitute a TRAM domain.

This sequence belongs to the methylthiotransferase family. RimO subfamily. Requires [4Fe-4S] cluster as cofactor.

The protein localises to the cytoplasm. The catalysed reaction is L-aspartate(89)-[ribosomal protein uS12]-hydrogen + (sulfur carrier)-SH + AH2 + 2 S-adenosyl-L-methionine = 3-methylsulfanyl-L-aspartate(89)-[ribosomal protein uS12]-hydrogen + (sulfur carrier)-H + 5'-deoxyadenosine + L-methionine + A + S-adenosyl-L-homocysteine + 2 H(+). Functionally, catalyzes the methylthiolation of an aspartic acid residue of ribosomal protein uS12. This Stenotrophomonas maltophilia (strain K279a) protein is Ribosomal protein uS12 methylthiotransferase RimO.